The sequence spans 249 residues: MKSNSNGKVALIVNADDAVGEAVALRLAGSGVQLALAGADAGRLDKLASQLAGKGATVMAVATAAVEAGAIRDSVAQVKARYGRIDVLVHNESALAANLPEISDADVGAALDTGLAAPFHYLRAVVPGMREAGFGRVVNISDLRYLGLANTSSVAAARSGLFGLTRALALESARDGVTVNTVVMGDVDSETTPAAEREKLAGGIPVKRLGTPADIANAVGFLAADSSKYVTGQTLFVCGGKSAYFSMSI.

It belongs to the short-chain dehydrogenases/reductases (SDR) family. In terms of assembly, heterotetramer composed of 2 inactive BbsC subunits and 2 active BbsD subunits.

It functions in the pathway xenobiotic degradation; toluene degradation. Its function is as follows. Involved in an anaerobic toluene degradation pathway. Catalytically inactive subunit, which is probably required for the structural and/or regulatory integrity of the catalytic subunit BbsD. This subunit cannot bind NAD(+) or substrate. This is (2S)-[(R)-hydroxy(phenyl)methyl]succinyl-CoA dehydrogenase subunit BbsC from Thauera aromatica.